The chain runs to 508 residues: MGLPWYRVHTVVLNDPGRLLSVHLMHTALVSGWAGSMALYELAVFDPSDPVLDPMWRQGMFVIPFMTRIGITKSWGGWSITGDTVNDAGIWSYEGVAASHIVLSGLLFLAAIWHWVYWDLDLFRDERTGKPSLDLPKIFGIHLFLSGVLCFGFGAFHITGLFGPGIWVSDPYGLTGKVQPVDPAWGAEGFDPFVPGGIASHHIAAGILGILAGLFHLSVRPPQRLYKALRMGNVETVLSSSIAAVFFAAFVVAGTMWYGSATTPIELFGPTRYQWDQGYFQQEIDRRIRASKAENLSLSEAWSKIPEKLAFYDYIGNNPAKGGLFRAGAMDNGDGIAVGWLGHATFKDKEGHELFVRRMPTFFETFPVVLVDEEGVVRADVPFRRAESKYSVEQVGVTVEFYGGELDGVSFSDPATVKKYARRAQLGEIFEFDRATLKSDGVFRSSPRGWFTFGHATFALIFFFGHIWHGARTLFRDVFAGIDPDLDAQVEFGAFQKLGDPTTKRQAV.

The next 6 membrane-spanning stretches (helical) occupy residues 21-36 (SVHL…WAGS), 101-115 (IVLS…IWHW), 140-156 (GIHL…FGAF), 203-218 (IAAG…FHLS), 237-252 (VLSS…AFVV), and 457-472 (TFAL…HGAR).

This sequence belongs to the PsbB/PsbC family. PsbB subfamily. As to quaternary structure, PSII is composed of 1 copy each of membrane proteins PsbA, PsbB, PsbC, PsbD, PsbE, PsbF, PsbH, PsbI, PsbJ, PsbK, PsbL, PsbM, PsbT, PsbX, PsbY, PsbZ, Psb30/Ycf12, at least 3 peripheral proteins of the oxygen-evolving complex and a large number of cofactors. It forms dimeric complexes. The cofactor is Binds multiple chlorophylls. PSII binds additional chlorophylls, carotenoids and specific lipids..

It is found in the plastid. It localises to the chloroplast thylakoid membrane. Its function is as follows. One of the components of the core complex of photosystem II (PSII). It binds chlorophyll and helps catalyze the primary light-induced photochemical processes of PSII. PSII is a light-driven water:plastoquinone oxidoreductase, using light energy to abstract electrons from H(2)O, generating O(2) and a proton gradient subsequently used for ATP formation. In Angiopteris evecta (Mule's foot fern), this protein is Photosystem II CP47 reaction center protein.